A 123-amino-acid chain; its full sequence is Potassium voltage-gated channel subfamily E member 2 (123 aa).

N-linked (GlcNAc...) asparagine glycans are attached at residues asparagine 6 and asparagine 29. Residues 49–69 (VILYLMVMIGMFAFIVVAILV) form a helical membrane-spanning segment. Residues 70–123 (STVKSKRREHSQDPYHQYIVEDWQQKYRSQILHLEDSKATIHENLGATGFTVSP) are Cytoplasmic-facing.

It belongs to the potassium channel KCNE family. Interacts with KCNB1. Associates with KCNH2/ERG1. May associate with KCNQ2 and KCNQ3. Associates with HCN1 and probably HCN2. Heteromultimer with KCNC2. Interacts with KCNC2. Interacts with KCNQ1; forms a heterooligomer complex that targets to the membrane raft and leading to currents with an apparently instantaneous activation, a rapid deactivation process and a linear current-voltage relationship and decreases the amplitude of the outward current.

Its subcellular location is the cell membrane. The protein resides in the apical cell membrane. Its function is as follows. Ancillary protein that functions as a regulatory subunit of the voltage-gated potassium (Kv) channel complex composed of pore-forming and potassium-conducting alpha subunits and of regulatory beta subunits. KCNE2 beta subunit modulates the gating kinetics and enhances stability of the channel complex. Alters the gating of the delayed rectifier Kv channel containing KCNB1 alpha subunit. Associates with KCNH2/HERG alpha subunit Kv channel to form the rapidly activating component of the delayed rectifying potassium current (IKr) in heart. May associate with KCNQ2 and/or KCNQ3 alpha subunits to modulate the native M-type current. May associate with HCN1 and HCN2 channel subunits to increase potassium current. Forms a heterooligomer complex with KCNQ1/KVLQT1 alpha subunits which leads to currents with an apparently instantaneous activation, a rapid deactivation process and a linear current-voltage relationship and decreases the amplitude of the outward current. KCNQ1-KCNE2 channel associates with Na(+)-coupled myo-inositol symporter in the apical membrane of choroid plexus epithelium and regulates the myo-inositol gradient between blood and cerebrospinal fluid with an impact on neuron excitability. The protein is Potassium voltage-gated channel subfamily E member 2 (Kcne2) of Cavia porcellus (Guinea pig).